Consider the following 191-residue polypeptide: Chorion class B protein Ld34 (191 aa).

The first 21 residues, 1 to 21, serve as a signal peptide directing secretion; it reads MSAKIILVFCAQALFVQSALS.

Belongs to the chorion protein family.

Functionally, this protein is one of many from the eggshell of the gypsy moth. This is Chorion class B protein Ld34 from Lymantria dispar (Gypsy moth).